We begin with the raw amino-acid sequence, 246 residues long: MSEQANALLLDIGNSFIKSAHVKISERVFEQPLIVTRCNEVSKLREQIKASQRVVAAAVGQGQQVKLLESLCAELHVPLILAKSQAQAFSMRCAYRNFSTLGVDRWLAVIAARRISNTDAYCVIDLGTANTCDVVIGHQHLGGWIAPGFSLMRDSLIKNTELVFANDDFPNDLTLGEQTVDCVNMGCAAAVNGFIYAAEQKMRERKSEYTVIITGGGQELIKKNAPKHYYFHKNLVLLGLLEYLFT.

11–18 (DIGNSFIK) contributes to the ATP binding site. Substrate is bound by residues Tyr95 and 102–105 (GVDR). Catalysis depends on Asp104, which acts as the Proton acceptor. Position 125 (Asp125) interacts with K(+). An ATP-binding site is contributed by Thr128. Thr179 is a binding site for substrate.

It belongs to the type III pantothenate kinase family. As to quaternary structure, homodimer. Requires NH4(+) as cofactor. The cofactor is K(+).

It localises to the cytoplasm. It catalyses the reaction (R)-pantothenate + ATP = (R)-4'-phosphopantothenate + ADP + H(+). It participates in cofactor biosynthesis; coenzyme A biosynthesis; CoA from (R)-pantothenate: step 1/5. Its function is as follows. Catalyzes the phosphorylation of pantothenate (Pan), the first step in CoA biosynthesis. The protein is Type III pantothenate kinase of Pseudoalteromonas atlantica (strain T6c / ATCC BAA-1087).